The sequence spans 429 residues: MNAPDATPVIALMDRLGSAARSASTAMAAASTAAKNAALLALAREIRAGAARLAAENARDLDVATRAGLAAPMVDRLRLTDKVIALMAEGCEQVAALPDPIGEMTNLRRRPSGITVGQMRVPLGVFGMVYESRPNVTIDAASLAIKSGNAAILRGGSEALHSNTALMALVVRALAEAGLPGDAVQLVPTTDRAAVGRLIAMPQYVDVIIPRGGKGLIERIAAEATVPVIKHLDGNCHVYVDAGADLDLAVRVTDNAKTQKYSPCNAAESLLVHRDVAAAFLPRIGAVFAAKGVEMRCGPRAKALLAAVPGAKLVDATEADWAEEYLAPVISIKLVDSLDEAIARINRYGSHHTDAILTTNHPNAMRFLREVDSASVMVNASTRFADGFEFGLGAEIGISTDKFHARGPVGLEGLTSMKWVVFGQGEVRT.

It belongs to the gamma-glutamyl phosphate reductase family.

The protein resides in the cytoplasm. It carries out the reaction L-glutamate 5-semialdehyde + phosphate + NADP(+) = L-glutamyl 5-phosphate + NADPH + H(+). It participates in amino-acid biosynthesis; L-proline biosynthesis; L-glutamate 5-semialdehyde from L-glutamate: step 2/2. In terms of biological role, catalyzes the NADPH-dependent reduction of L-glutamate 5-phosphate into L-glutamate 5-semialdehyde and phosphate. The product spontaneously undergoes cyclization to form 1-pyrroline-5-carboxylate. The protein is Gamma-glutamyl phosphate reductase of Methylibium petroleiphilum (strain ATCC BAA-1232 / LMG 22953 / PM1).